Here is a 319-residue protein sequence, read N- to C-terminus: tRNA uridine(34) hydroxylase (319 aa).

In terms of domain architecture, Rhodanese spans 127–221; it reads KQEDTVIIDA…YGKDPEVQGE (95 aa). The active-site Cysteine persulfide intermediate is Cys181.

Belongs to the TrhO family.

The catalysed reaction is uridine(34) in tRNA + AH2 + O2 = 5-hydroxyuridine(34) in tRNA + A + H2O. Functionally, catalyzes oxygen-dependent 5-hydroxyuridine (ho5U) modification at position 34 in tRNAs. The sequence is that of tRNA uridine(34) hydroxylase from Bacillus cereus (strain G9842).